We begin with the raw amino-acid sequence, 149 residues long: Protein Rv2250A (149 aa).

This chain is Protein Rv2250A, found in Mycobacterium tuberculosis (strain ATCC 25618 / H37Rv).